The following is a 510-amino-acid chain: NAD(P)H-quinone oxidoreductase subunit 2 A, chloroplastic (510 aa).

Transmembrane regions (helical) follow at residues leucine 24–leucine 44, tryptophan 59–tryptophan 79, isoleucine 99–isoleucine 119, methionine 124–cysteine 144, leucine 149–tyrosine 169, tyrosine 183–glycine 203, isoleucine 229–phenylalanine 249, tryptophan 295–isoleucine 315, methionine 323–aspartate 343, tyrosine 354–leucine 374, alanine 395–phenylalanine 415, and leucine 418–leucine 438.

The protein belongs to the complex I subunit 2 family. In terms of assembly, NDH is composed of at least 16 different subunits, 5 of which are encoded in the nucleus.

The protein resides in the plastid. It is found in the chloroplast thylakoid membrane. The catalysed reaction is a plastoquinone + NADH + (n+1) H(+)(in) = a plastoquinol + NAD(+) + n H(+)(out). It catalyses the reaction a plastoquinone + NADPH + (n+1) H(+)(in) = a plastoquinol + NADP(+) + n H(+)(out). Functionally, NDH shuttles electrons from NAD(P)H:plastoquinone, via FMN and iron-sulfur (Fe-S) centers, to quinones in the photosynthetic chain and possibly in a chloroplast respiratory chain. The immediate electron acceptor for the enzyme in this species is believed to be plastoquinone. Couples the redox reaction to proton translocation, and thus conserves the redox energy in a proton gradient. In Dioscorea elephantipes (Elephant's foot yam), this protein is NAD(P)H-quinone oxidoreductase subunit 2 A, chloroplastic.